The sequence spans 275 residues: Large ribosomal subunit protein uL2 (275 aa).

Residues 223–275 are disordered; it reads VAMNPVDHPHGGGEGRTSGGRHPVSPWGQPTKGYKTRSNKRTDKYIVRRRNKK.

This sequence belongs to the universal ribosomal protein uL2 family. In terms of assembly, part of the 50S ribosomal subunit. Forms a bridge to the 30S subunit in the 70S ribosome.

Its function is as follows. One of the primary rRNA binding proteins. Required for association of the 30S and 50S subunits to form the 70S ribosome, for tRNA binding and peptide bond formation. It has been suggested to have peptidyltransferase activity; this is somewhat controversial. Makes several contacts with the 16S rRNA in the 70S ribosome. The protein is Large ribosomal subunit protein uL2 of Shewanella piezotolerans (strain WP3 / JCM 13877).